A 241-amino-acid chain; its full sequence is Small ribosomal subunit protein uS2 (241 aa).

It belongs to the universal ribosomal protein uS2 family.

The sequence is that of Small ribosomal subunit protein uS2 from Klebsiella pneumoniae subsp. pneumoniae (strain ATCC 700721 / MGH 78578).